The primary structure comprises 593 residues: Probable E3 ubiquitin-protein ligase ARI2 (593 aa).

The tract at residues 120 to 334 (SMMSCDICVE…ISGHSCGRFQ (215 aa)) is TRIAD supradomain. Zn(2+)-binding residues include C124, C127, C141, H143, C146, C149, C168, C173, C215, C221, C237, C239, C244, C247, H252, C257, C284, and C287. The RING-type 1 zinc finger occupies 124 to 173 (CDICVEDVPGYQLTRMDCGHSFCNNCWTGHFTVKINEGQSKRIICMAHKC). The IBR-type zinc-finger motif lies at 195 to 257 (EKFDRFLLES…SSQAHSPCSC (63 aa)). An RING-type 2; atypical zinc finger spans residues 284–312 (CPKCHKPVEKNGGCNLVTCLCRQSFCWLC). C297 is a catalytic residue. The Zn(2+) site is built by C302, C304, C309, C312, H320, and C330.

This sequence belongs to the RBR family. Ariadne subfamily. It depends on Zn(2+) as a cofactor. Ubiquitous.

The catalysed reaction is [E2 ubiquitin-conjugating enzyme]-S-ubiquitinyl-L-cysteine + [acceptor protein]-L-lysine = [E2 ubiquitin-conjugating enzyme]-L-cysteine + [acceptor protein]-N(6)-ubiquitinyl-L-lysine.. Its pathway is protein modification; protein ubiquitination. In terms of biological role, might act as an E3 ubiquitin-protein ligase, or as part of E3 complex, which accepts ubiquitin from specific E2 ubiquitin-conjugating enzymes and then transfers it to substrates. The polypeptide is Probable E3 ubiquitin-protein ligase ARI2 (ARI2) (Arabidopsis thaliana (Mouse-ear cress)).